The primary structure comprises 483 residues: tRNA sulfurtransferase (483 aa).

In terms of domain architecture, THUMP spans 62–166; it reads PEICDALTRI…QDKLILVKAR (105 aa). Residues 184 to 185, lysine 266, glycine 288, and glutamine 297 contribute to the ATP site; that span reads LI. A disulfide bridge connects residues cysteine 345 and cysteine 457. Residues 405–483 enclose the Rhodanese domain; the sequence is LADTDVLLDI…GYTNVKVYRP (79 aa). The active-site Cysteine persulfide intermediate is cysteine 457.

The protein belongs to the ThiI family.

The protein localises to the cytoplasm. The enzyme catalyses [ThiI sulfur-carrier protein]-S-sulfanyl-L-cysteine + a uridine in tRNA + 2 reduced [2Fe-2S]-[ferredoxin] + ATP + H(+) = [ThiI sulfur-carrier protein]-L-cysteine + a 4-thiouridine in tRNA + 2 oxidized [2Fe-2S]-[ferredoxin] + AMP + diphosphate. It catalyses the reaction [ThiS sulfur-carrier protein]-C-terminal Gly-Gly-AMP + S-sulfanyl-L-cysteinyl-[cysteine desulfurase] + AH2 = [ThiS sulfur-carrier protein]-C-terminal-Gly-aminoethanethioate + L-cysteinyl-[cysteine desulfurase] + A + AMP + 2 H(+). It functions in the pathway cofactor biosynthesis; thiamine diphosphate biosynthesis. Functionally, catalyzes the ATP-dependent transfer of a sulfur to tRNA to produce 4-thiouridine in position 8 of tRNAs, which functions as a near-UV photosensor. Also catalyzes the transfer of sulfur to the sulfur carrier protein ThiS, forming ThiS-thiocarboxylate. This is a step in the synthesis of thiazole, in the thiamine biosynthesis pathway. The sulfur is donated as persulfide by IscS. The protein is tRNA sulfurtransferase of Yersinia pseudotuberculosis serotype O:1b (strain IP 31758).